The following is a 568-amino-acid chain: Sesquiterpene synthase 14 (568 aa).

4 residues coordinate Mg(2+): Asp-319, Asp-323, Asp-463, and Glu-471. The DDXXD motif signature appears at Asp-319–Asp-323.

Belongs to the terpene synthase family. Tpsa subfamily. Mg(2+) serves as cofactor. Requires Mn(2+) as cofactor. In terms of tissue distribution, mostly expressed in roots, to a lower extent in flowers and, at low levels, in fruits.

The enzyme catalyses (2Z,6Z)-farnesyl diphosphate = (E)-alpha-bisabolene + diphosphate. It carries out the reaction (2Z,6Z)-farnesyl diphosphate = beta-bisabolene + diphosphate. It catalyses the reaction (2E,6E)-farnesyl diphosphate = beta-bisabolene + diphosphate. The catalysed reaction is (2E,6E)-farnesyl diphosphate = (Z)-gamma-bisabolene + diphosphate. The enzyme catalyses (2E,6E)-farnesyl diphosphate = (E)-gamma-bisabolene + diphosphate. It carries out the reaction (2Z,6Z)-farnesyl diphosphate = (E)-gamma-bisabolene + diphosphate. Its pathway is secondary metabolite biosynthesis; terpenoid biosynthesis. Its function is as follows. Sesquiterpene synthase involved in the biosynthesis of volatile compounds. Mediates the conversion of (2E,6E)-farnesyl diphosphate ((EE)-FPP) into beta-bisabolene, and of (2Z,6Z)-farnesyl diphosphate ((ZZ)-FPP) into alpha-bisabolene, but also smaller amounts of (Z)-gamma-bisabolene, (E)-gamma-bisabolene and nerolidol. In Solanum lycopersicum (Tomato), this protein is Sesquiterpene synthase 14.